Reading from the N-terminus, the 1136-residue chain is Probable LRR receptor-like serine/threonine-protein kinase At4g36180 (1136 aa).

A signal peptide spans 1-22 (MAMDISLFFIFLVIYAPLVSYA). The Extracellular portion of the chain corresponds to 23 to 751 (DESQAEIDAL…TAEGKKKKRK (729 aa)). LRR repeat units lie at residues 93–115 (MLRK…LAYC), 117–139 (RLLS…MRNL), 141–162 (SLEV…GLPS), 163–186 (SLQF…ANLT), 187–210 (QLQL…GNLQ), 211–233 (SLQY…ISNC), 235–256 (SLVH…AYGA), and 259–280 (KLEV…SLFC). N-linked (GlcNAc...) asparagine glycans are attached at residues Asn-105 and Asn-138. Residues Asn-184, Asn-192, and Asn-232 are each glycosylated (N-linked (GlcNAc...) asparagine). N-linked (GlcNAc...) asparagine glycosylation is found at Asn-269 and Asn-281. LRR repeat units follow at residues 283–304 (SLTI…ETTA), 309–330 (GLQV…WLTN), 333–355 (SLKN…IGNL), 357–379 (RLEE…IKQC), 381–403 (SLDV…LGYM), 405–426 (ALKV…SMVN), 429–452 (QLER…MALT), 453–479 (SLSE…SNLS), 480–500 (FLNL…GNLF), 501–524 (KLTA…SGLP), 525–546 (NVQV…GFSS), 549–571 (SLRY…FGFL), 573–595 (LLVS…IGNC), 597–620 (ALEV…SRLP), 621–643 (RLKV…ISQS), 645–666 (SLNS…SFSG), 669–691 (NLTK…LALI), and 694–716 (NLVY…LGSR). A glycan (N-linked (GlcNAc...) asparagine) is linked at Asn-365. Residues Asn-441, Asn-474, Asn-477, Asn-482, Asn-511, Asn-535, Asn-554, and Asn-594 are each glycosylated (N-linked (GlcNAc...) asparagine). Asn-631 is a glycosylation site (N-linked (GlcNAc...) asparagine). Residues Asn-669, Asn-679, Asn-699, and Asn-719 are each glycosylated (N-linked (GlcNAc...) asparagine). Residues 752 to 772 (MILMIVMAAIGAFLLSLFCCF) form a helical membrane-spanning segment. At 773–1136 (YVYTLLKWRK…ADPTSQPSPA (364 aa)) the chain is on the cytoplasmic side. Positions 786–819 (QQSTTGEKKRSPGRTSAGSRVRSSTSRSSTENGE) are disordered. The segment covering 799-815 (RTSAGSRVRSSTSRSST) has biased composition (low complexity). A phosphothreonine mark is found at Thr-830 and Thr-838. Residues 841–1123 (FDEENVLSRT…LEGCRVGPDV (283 aa)) form the Protein kinase domain. Residues Tyr-915 and Tyr-1010 each carry the phosphotyrosine modification.

The protein belongs to the protein kinase superfamily. Ser/Thr protein kinase family.

The protein localises to the cell membrane. The catalysed reaction is L-seryl-[protein] + ATP = O-phospho-L-seryl-[protein] + ADP + H(+). It catalyses the reaction L-threonyl-[protein] + ATP = O-phospho-L-threonyl-[protein] + ADP + H(+). The protein is Probable LRR receptor-like serine/threonine-protein kinase At4g36180 of Arabidopsis thaliana (Mouse-ear cress).